We begin with the raw amino-acid sequence, 268 residues long: Undecaprenyl-diphosphatase 1 (268 aa).

The next 7 membrane-spanning stretches (helical) occupy residues Ser5–Ser25, Gly43–Phe63, Leu84–Ile104, Val107–Leu127, Ala184–Leu204, Leu218–Leu238, and Ala247–Ile267.

The protein belongs to the UppP family.

It localises to the cell inner membrane. It carries out the reaction di-trans,octa-cis-undecaprenyl diphosphate + H2O = di-trans,octa-cis-undecaprenyl phosphate + phosphate + H(+). Catalyzes the dephosphorylation of undecaprenyl diphosphate (UPP). Confers resistance to bacitracin. This is Undecaprenyl-diphosphatase 1 from Agrobacterium fabrum (strain C58 / ATCC 33970) (Agrobacterium tumefaciens (strain C58)).